A 334-amino-acid polypeptide reads, in one-letter code: Methionine adenosyltransferase 2 subunit beta (334 aa).

NADP(+)-binding positions include 37–40, 60–62, 71–72, cysteine 93, arginine 97, tyrosine 159, and leucine 185; these read TGLL, FRR, and NL. Threonine 309 is subject to Phosphothreonine. Residues 319 to 334 form a required for interaction with MAT2A region; it reads LWPFLIDKRWRQTVFH.

The protein belongs to the dTDP-4-dehydrorhamnose reductase family. MAT2B subfamily. In terms of assembly, heterotrimer; composed of a catalytic MAT2A homodimer that binds one regulatory MAT2B chain. Heterohexamer; composed of a central, catalytic MAT2A homotetramer flanked on either side by a regulatory MAT2B chain. NADP binding increases the affinity for MAT2A.

It functions in the pathway amino-acid biosynthesis; S-adenosyl-L-methionine biosynthesis; S-adenosyl-L-methionine from L-methionine: step 1/1. In terms of biological role, regulatory subunit of S-adenosylmethionine synthetase 2, an enzyme that catalyzes the formation of S-adenosylmethionine from methionine and ATP. Regulates MAT2A catalytic activity by changing its kinetic properties, increasing its affinity for L-methionine. Can bind NADP (in vitro). The chain is Methionine adenosyltransferase 2 subunit beta (Mat2b) from Rattus norvegicus (Rat).